The following is a 153-amino-acid chain: Small ribosomal subunit protein uS11 (153 aa).

Belongs to the universal ribosomal protein uS11 family.

The protein is Small ribosomal subunit protein uS11 (RPS14) of Chlamydomonas reinhardtii (Chlamydomonas smithii).